A 228-amino-acid chain; its full sequence is UPF0173 metal-dependent hydrolase Dred_1740 (228 aa).

The protein belongs to the UPF0173 family.

This Desulforamulus reducens (strain ATCC BAA-1160 / DSM 100696 / MI-1) (Desulfotomaculum reducens) protein is UPF0173 metal-dependent hydrolase Dred_1740.